The sequence spans 1500 residues: DNA-directed RNA polymerase subunit beta' (1500 aa).

Zn(2+)-binding residues include Cys60, Cys62, Cys75, and Cys78. The segment at 180-199 (DLGGMETAQRSTQRQIEEDY) is disordered. The Mg(2+) site is built by Asp626, Asp628, and Asp630. The Zn(2+) site is built by Cys1002, Cys1075, Cys1082, and Cys1085. Residues 1440 to 1500 (EVQQAEKSAE…DSDHPDLSSL (61 aa)) are disordered. Residues 1449–1468 (EPTTTALPTTNGHQAPQSDT) are compositionally biased toward polar residues.

It belongs to the RNA polymerase beta' chain family. The RNAP catalytic core consists of 2 alpha, 1 beta, 1 beta' and 1 omega subunit. When a sigma factor is associated with the core the holoenzyme is formed, which can initiate transcription. The cofactor is Mg(2+). Requires Zn(2+) as cofactor.

The catalysed reaction is RNA(n) + a ribonucleoside 5'-triphosphate = RNA(n+1) + diphosphate. In terms of biological role, DNA-dependent RNA polymerase catalyzes the transcription of DNA into RNA using the four ribonucleoside triphosphates as substrates. The chain is DNA-directed RNA polymerase subunit beta' from Chloroflexus aggregans (strain MD-66 / DSM 9485).